A 76-amino-acid polypeptide reads, in one-letter code: Dermaseptin-S7 (76 aa).

A signal peptide spans 1–22 (MDILKKSLFLVLFLGLISLSFC). The propeptide occupies 23-45 (EEEKRENEDEEEQEDDEQSEEKR). The disordered stretch occupies residues 25–45 (EKRENEDEEEQEDDEQSEEKR). Over residues 30-41 (EDEEEQEDDEQS) the composition is skewed to acidic residues. At Gln73 the chain carries Glutamine amide. Positions 75 to 76 (EQ) are excised as a propeptide.

It belongs to the frog skin active peptide (FSAP) family. Dermaseptin subfamily. Expressed by the skin glands.

The protein localises to the secreted. Its function is as follows. Antimicrobial peptide. In Phyllomedusa sauvagei (Sauvage's leaf frog), this protein is Dermaseptin-S7.